The chain runs to 438 residues: Adenylyltransferase and sulfurtransferase UBA4 (438 aa).

ATP contacts are provided by residues glycine 81, aspartate 102, 109–113 (SNLHR), lysine 126, and 170–171 (DH). Residues cysteine 212 and cysteine 215 each coordinate Zn(2+). Catalysis depends on cysteine 229, which acts as the Glycyl thioester intermediate; for adenylyltransferase activity. Residues cysteine 290 and cysteine 293 each coordinate Zn(2+). Residues 340–436 (NKKKHILIDV…WSDDVDSKIP (97 aa)) form the Rhodanese domain. Cysteine 396 acts as the Cysteine persulfide intermediate; for sulfurtransferase activity in catalysis.

This sequence in the N-terminal section; belongs to the HesA/MoeB/ThiF family. UBA4 subfamily. Zn(2+) serves as cofactor.

The protein localises to the cytoplasm. It is found in the cytosol. The protein operates within tRNA modification; 5-methoxycarbonylmethyl-2-thiouridine-tRNA biosynthesis. Plays a central role in 2-thiolation of mcm(5)S(2)U at tRNA wobble positions of cytosolic tRNA(Lys), tRNA(Glu) and tRNA(Gln). Acts by mediating the C-terminal thiocarboxylation of sulfur carrier URM1. Its N-terminus first activates URM1 as acyl-adenylate (-COAMP), then the persulfide sulfur on the catalytic cysteine is transferred to URM1 to form thiocarboxylation (-COSH) of its C-terminus. The reaction probably involves hydrogen sulfide that is generated from the persulfide intermediate and that acts as a nucleophile towards URM1. Subsequently, a transient disulfide bond is formed. Does not use thiosulfate as sulfur donor; NFS1 probably acting as a sulfur donor for thiocarboxylation reactions. Prior mcm(5) tRNA modification by the elongator complex is required for 2-thiolation. May also be involved in protein urmylation. In Candida albicans (strain SC5314 / ATCC MYA-2876) (Yeast), this protein is Adenylyltransferase and sulfurtransferase UBA4.